Here is a 212-residue protein sequence, read N- to C-terminus: Prohead core protein protease (212 aa).

His85 is a catalytic residue. The homomultimerization stretch occupies residues 117 to 136 (IEGDHGPGDKLAANIRAGWI). The active site involves Ser140. Positions 207-212 (AMKKAL) are excised as a propeptide.

Belongs to the peptidase U9 family. In terms of assembly, homopentamer. Post-translationally, the self-cleavage of the N-terminus allows the activation of the protease. Probably also self-cleaved at the C-terminus in order to detach the protease from the scaffold protein and allow it to diffuse within the prohead to cleave the prohead proteins. After cleavage of the inner core of the prohead, the gp21 protease also destroys itself into small cleavage products.

In terms of biological role, serine protease ot the inner core, which is activated by autocatalytic cleavage after completion of prohead assembly and processes many prohead proteins. These cleaved peptides from the inner core and the auto-cleaved protease escape from the capsid, thus liberating space for the phage DNA genome. Cleaves the prohead proteins after the sequence motif L/I-X-E. In Escherichia coli (Bacteriophage T4), this protein is Prohead core protein protease (21).